The sequence spans 317 residues: Ribosomal protein L11 methyltransferase (317 aa).

Residues Thr158, Gly179, Asp201, and Asn244 each coordinate S-adenosyl-L-methionine.

Belongs to the methyltransferase superfamily. PrmA family.

It is found in the cytoplasm. It carries out the reaction L-lysyl-[protein] + 3 S-adenosyl-L-methionine = N(6),N(6),N(6)-trimethyl-L-lysyl-[protein] + 3 S-adenosyl-L-homocysteine + 3 H(+). Methylates ribosomal protein L11. The chain is Ribosomal protein L11 methyltransferase from Lactococcus lactis subsp. cremoris (strain SK11).